A 172-amino-acid polypeptide reads, in one-letter code: RNA silencing suppressor p19 (172 aa).

The disordered stretch occupies residues 153-172; sequence EGNVSRGSPEGTEAFKEESE.

The protein belongs to the tombusvirus protein p19 family. As to quaternary structure, homodimer.

Its function is as follows. Viral suppressor of RNA silencing which binds specifically to silencing RNAs (siRNAs). Acts as a molecular caliper to specifically select siRNAs based on the length of the duplex region of the RNA. This is RNA silencing suppressor p19 from Pear latent virus (PeLV).